Consider the following 350-residue polypeptide: C-X-C chemokine receptor type 1 (350 aa).

The Extracellular segment spans residues 1-39; the sequence is MSNITDPQMWDFDDLNFTGMPPADEDYSPCMLETETLNK. Residues asparagine 3 and asparagine 16 are each glycosylated (N-linked (GlcNAc...) asparagine). Residues 40 to 66 form a helical membrane-spanning segment; the sequence is YVVIIAYALVFLLSLLGNSLVMLVILY. The Cytoplasmic segment spans residues 67–75; sequence SRVGRSVTD. Residues 76–96 form a helical membrane-spanning segment; that stretch reads VYLLNLALADLLFALTLPIWA. Topologically, residues 97–111 are extracellular; the sequence is ASKVNGWIFGTFLCK. Cysteines 110 and 187 form a disulfide. A helical transmembrane segment spans residues 112-133; the sequence is VVSLLKEVNFYSGILLLACISV. Residues 134–154 lie on the Cytoplasmic side of the membrane; that stretch reads DRYLAIVHATRTLTQKRHLVK. Residues 155–174 traverse the membrane as a helical segment; sequence FVCLGCWGLSMNLSLPFFLF. Topologically, residues 175–199 are extracellular; the sequence is RQAYHPNNSSPVCYEVLGNDTAKWR. Residues 200 to 220 form a helical membrane-spanning segment; the sequence is MVLRILPHTFGFIVPLFVMLF. At 221 to 242 the chain is on the cytoplasmic side; it reads CYGFTLRTLFKAHMGQKHRAMR. A helical transmembrane segment spans residues 243–264; sequence VIFAVVLIFLLCWLPYNLVLLA. Residues 265–285 lie on the Extracellular side of the membrane; that stretch reads DTLMRTQVIQESCERRNNIGR. A helical transmembrane segment spans residues 286-308; that stretch reads ALDATEILGFLHSCLNPIIYAFI. The Cytoplasmic segment spans residues 309 to 350; the sequence is GQNFRHGFLKILAMHGLVSKEFLARHRVTSYTSSSVNVSSNL.

It belongs to the G-protein coupled receptor 1 family. As to quaternary structure, interacts with IL8. Interacts with GNAI2.

It localises to the cell membrane. Its function is as follows. Receptor to interleukin-8, which is a powerful neutrophils chemotactic factor. Binding of IL-8 to the receptor causes activation of neutrophils. This response is mediated via a G-protein that activates a phosphatidylinositol-calcium second messenger system. The chain is C-X-C chemokine receptor type 1 (CXCR1) from Homo sapiens (Human).